Reading from the N-terminus, the 146-residue chain is Transcriptional regulator MraZ (146 aa).

SpoVT-AbrB domains lie at 5–51 and 80–123; these read NHPT…PLQE and GQMV…NHEA.

This sequence belongs to the MraZ family. As to quaternary structure, forms oligomers.

Its subcellular location is the cytoplasm. The protein localises to the nucleoid. The polypeptide is Transcriptional regulator MraZ (Acidobacterium capsulatum (strain ATCC 51196 / DSM 11244 / BCRC 80197 / JCM 7670 / NBRC 15755 / NCIMB 13165 / 161)).